Consider the following 251-residue polypeptide: Small ribosomal subunit protein uS2 (251 aa).

Belongs to the universal ribosomal protein uS2 family.

The protein is Small ribosomal subunit protein uS2 of Nitrosomonas europaea (strain ATCC 19718 / CIP 103999 / KCTC 2705 / NBRC 14298).